A 142-amino-acid chain; its full sequence is Transcription antitermination protein NusB (142 aa).

This sequence belongs to the NusB family.

Functionally, involved in transcription antitermination. Required for transcription of ribosomal RNA (rRNA) genes. Binds specifically to the boxA antiterminator sequence of the ribosomal RNA (rrn) operons. The chain is Transcription antitermination protein NusB from Actinobacillus succinogenes (strain ATCC 55618 / DSM 22257 / CCUG 43843 / 130Z).